A 465-amino-acid chain; its full sequence is MFIDGKWIIREDIDVFDPYTLENIEKITALDREETKNAIEVTEKHKEIMKNLSPSKRYKILMKVAEHLSSKKDFFAKTISIDVGKPIKQSKIEVDRTLTALKLSAFYAKELRGETINSENGLIFTKKEPLGVIGAITPFNFPLNLATHKIGPAIATGNSVVLHPSSKAPIVAIYLTKIIEHVLKQMDIPRGVFNLATGNGEIVGDEISKNDNVNMVSFTGSVEVGESISKNAKMKKVTLELGGNNPMIVLKDSDIKLAAKSAVKSKFLNAGQVCISVGQVLVEEEVVETFTKYVIEETKKLILGNPLDKNTDIGPLISPESALRIENLIKQSVSEGGELLIGGNRQNSLISPAVINIDEENILSKIETFGPILPILTVKDSEEAVNIANNSKYGLQAGLFTNNINNAMKIADELEYGGIMINSSPTFRKDNMPFGGVKKSGLGREGIKYTVEEMSETKTVVIHNI.

Position 220–225 (220–225 (GSVEVG)) interacts with NAD(+). Residues Glu240 and Cys274 contribute to the active site.

This sequence belongs to the aldehyde dehydrogenase family. In terms of assembly, homotetramer.

The catalysed reaction is (S)-lactaldehyde + NAD(+) + H2O = (S)-lactate + NADH + 2 H(+). It functions in the pathway cofactor biosynthesis; coenzyme F420 biosynthesis. Functionally, involved in F420 biosynthesis through the oxidation of lactaldehyde to lactate. In Methanococcus maripaludis (strain DSM 14266 / JCM 13030 / NBRC 101832 / S2 / LL), this protein is Lactaldehyde dehydrogenase.